We begin with the raw amino-acid sequence, 455 residues long: Alcohol acyl transferase 1 allele GSb (455 aa).

Catalysis depends on proton acceptor residues His-164 and Asn-385.

The protein belongs to the plant acyltransferase family. As to expression, expressed at very low levels in the skin of ripe fruit.

Its function is as follows. Involved in the biosynthesis of volatile esters which confer ripe apple fruit flavor. Alcohol acyl transferase that can use a wide range of alcohols as substrate to produce esters. The polypeptide is Alcohol acyl transferase 1 allele GSb (Malus domestica (Apple)).